Reading from the N-terminus, the 153-residue chain is Spanin, inner membrane subunit (153 aa).

The Cytoplasmic portion of the chain corresponds to 1-3 (MSR). A helical; Signal-anchor for type II membrane protein transmembrane segment spans residues 4–24 (VTAIISALVICIIVCLSWAVN). Over 25-153 (HYRDNAITYK…TQKYINEQCR (129 aa)) the chain is Periplasmic. Residues 65 to 92 (DAKYTKELADAKAENDALRDDVAAGRRR) adopt a coiled-coil conformation.

This sequence belongs to the Lambdavirus i-spanin family. Homodimer; disulfide-linked. Interacts (via C-terminus) with the spanin outer lipoprotein subunit (via C-terminus). Part of the spanin complex which spans the entire periplasmic space. The spanin complex is composed of one homodimer of the i-spanin linked by intermolecular disulfide bonds involving two Cys residues and one homodimer of the o-spanin covalently linked by an intermolecular disulfide bond involving one Cys.

It is found in the host cell inner membrane. Its function is as follows. Component of the spanin complex that disrupts the host outer membrane and participates in cell lysis during virus exit. The spanin complex conducts the final step in host lysis by disrupting the outer membrane after holin and endolysin have permeabilized the inner membrane and degraded the host peptidoglycans. Host outer membrane disruption is due to local fusion between the inner and outer membrane performed by the spanin complex. This chain is Spanin, inner membrane subunit (Rz), found in Escherichia phage lambda (Bacteriophage lambda).